Here is a 326-residue protein sequence, read N- to C-terminus: Ribonuclease H2 subunit A (326 aa).

The interval 1–47 (MKDDHDAWEPEELVSDNNSSENELQEDQNSSITFLPPSVNKSNPAKS) is disordered. Residues 15 to 47 (SDNNSSENELQEDQNSSITFLPPSVNKSNPAKS) show a composition bias toward polar residues. One can recognise an RNase H type-2 domain in the interval 63–286 (PYRLGVDEAG…AKDLLELPSK (224 aa)). Positions 69, 70, and 180 each coordinate a divalent metal cation.

It belongs to the RNase HII family. Eukaryotic subfamily. The cofactor is Mn(2+). Requires Mg(2+) as cofactor.

The enzyme catalyses Endonucleolytic cleavage to 5'-phosphomonoester.. Functionally, endonuclease that specifically degrades the RNA of RNA-DNA hybrids. Participates in DNA replication. In Schizosaccharomyces pombe (strain 972 / ATCC 24843) (Fission yeast), this protein is Ribonuclease H2 subunit A (rnh201).